The sequence spans 4004 residues: Hybrid PKS-NRPS synthetase mpsA (4004 aa).

The Ketosynthase family 3 (KS3) domain occupies 5–438 (NEPIAVIGSA…GANAHAILES (434 aa)). Residues Cys-178, His-317, and His-358 each act as for beta-ketoacyl synthase activity in the active site. One can recognise a Malonyl-CoA:ACP transacylase (MAT) domain in the interval 544-867 (VFTGQGAQWP…RGGDDVNAFS (324 aa)). The segment at 933–1066 (HPILGVKSIE…GTISITLGIP (134 aa)) is N-terminal hotdog fold. The dehydratase (DH) domain stretch occupies residues 933–1233 (HPILGVKSIE…SMVPFSNATA (301 aa)). The 302-residue stretch at 933-1234 (HPILGVKSIE…MVPFSNATAE (302 aa)) folds into the PKS/mFAS DH domain. His-966 (proton acceptor; for dehydratase activity) is an active-site residue. The tract at residues 1081–1234 (MVDVEVDRFY…MVPFSNATAE (154 aa)) is C-terminal hotdog fold. Asp-1141 acts as the Proton donor; for dehydratase activity in catalysis. The tract at residues 1289–1575 (EEEEQTLIHY…DTYAPNFDSL (287 aa)) is methyltransferase (MT) domain. One can recognise a Ketoreductase (KR) domain in the interval 2102–2272 (TYFMVGLSGE…RRGLAASILG (171 aa)). Positions 2384-2462 (EVVEIMQAGF…DLLNDALDRL (79 aa)) constitute a Carrier 1 domain. The residue at position 2422 (Ser-2422) is an O-(pantetheine 4'-phosphoryl)serine. Residues 2471 to 2540 (GADPSSVSRP…ERRAAELARK (70 aa)) are disordered. Low complexity predominate over residues 2488-2500 (PSVSRPASNAPPV). Residues 2514–2540 (LKAEREREAEAKRKREEERRAAELARK) are compositionally biased toward basic and acidic residues. The condensation (C) domain stretch occupies residues 2584–3019 (PMSFGQSRFW…RQCAERPGRE (436 aa)). Residues 3060 to 3459 (KRHTASLAIK…GRIEGDTQIK (400 aa)) form an adenylation (A) (KR) domain region. The 78-residue stretch at 3570–3647 (ANLTPTESRL…GMARAIDDAT (78 aa)) folds into the Carrier 2 domain. Ser-3607 bears the O-(pantetheine 4'-phosphoryl)serine mark. Positions 3694-3924 (LTIVLTGATG…VVEGVAQALF (231 aa)) are reductase (RED) domain.

This sequence in the C-terminal section; belongs to the NRP synthetase family. It depends on pantetheine 4'-phosphate as a cofactor.

Its pathway is secondary metabolite biosynthesis. Functionally, hybrid PKS-NRPS synthetase; part of the gene cluster that mediates the biosynthesis of macrophasetins, 3-decalinoyltetramic acids (DTAs) which feature a tetramate (pyrrolidine-2,4-dione) unit connected to a decalin fragment and that have potent bioactivities. The PKS-NRPS mpsA together with its associated enoylreductase partner mpsG incorporate one unit of acetyl-CoA, seven units of malonyl-CoA, and one unit of L-alanine to assemble the linear tetramic acid intermediate corresponding to the backbone of macrophasetins. Without the Diels-Alderase mpsD, the mpsA/G product can undergo the non-enzymatic intramolecular Diels-Alder (IMDA) reaction to generate both macrophasetin A and macrophasetin B. Catalyzed by mpsD, the linear tetramic acid intermediate is thoroughly converted to macrophasetin A via the endo-IMDA reaction in a regioselective and stereoselective manner. Finally, the cytochrome P450 monooxygenase mpsF catalyzes the hydroxylation at C20 to yield the end product macrophasetin C. The sequence is that of Hybrid PKS-NRPS synthetase mpsA from Macrophomina phaseolina (strain MS6) (Charcoal rot fungus).